The following is a 209-amino-acid chain: Germin-like protein (209 aa).

An N-terminal signal peptide occupies residues 1-18 (MIVPIFFLFSLLFSSSHG). An intrachain disulfide couples cysteine 24 to cysteine 39. Positions 53–199 (SGLGITGNTT…ASFLDPAEIK (147 aa)) constitute a Cupin type-1 domain. N-linked (GlcNAc...) asparagine glycosylation is present at asparagine 60. Mn(2+) is bound by residues histidine 101, histidine 103, glutamate 108, and histidine 147.

The protein localises to the secreted. It is found in the extracellular space. Its subcellular location is the apoplast. Functionally, has antibacterial activity against B.subtilis (MIC=5 ug), B.cereus (MIC=50 ug), A.hydrophila (MIC=2.5 ug), S.marcescens(MIC=10 ug), S.enterica (MIC=10 ug), P.entomophila (MIC=2.5 ug) and P.rhodesiae (MIC=10 ug). Has antifungal activity against F.solani KACC 40384 and F.oxysporum KACC 40032. Probably has no oxalate oxidase activity even if the active site is conserved. The protein is Germin-like protein of Morus alba (White mulberry).